The chain runs to 170 residues: Odorant-binding protein 2b (170 aa).

An N-terminal signal peptide occupies residues 1 to 15; that stretch reads MKTLFLGVTLGLAAA. An intrachain disulfide couples Cys74 to Cys166.

The protein belongs to the calycin superfamily. Lipocalin family. Strongly expressed in genital sphere organs such as the prostate and mammary glands.

Its subcellular location is the secreted. Functionally, probably binds and transports small hydrophobic volatile molecules. The protein is Odorant-binding protein 2b (OBP2B) of Homo sapiens (Human).